The primary structure comprises 63 residues: Jingdongin-1 (63 aa).

Residues 1–22 form the signal peptide; it reads MLTLKKSMLLLFFLGTINLSLC. A propeptide spanning residues 23–44 is cleaved from the precursor; that stretch reads EQERDADEEERRDDDEMDVEVE. Cysteines 57 and 63 form a disulfide.

As to expression, expressed by the skin glands.

The protein resides in the secreted. Functionally, the synthetic peptide has antimicrobial activity against Gram-negative bacterium B.dysenteriae (MIC=35 ug/ml), against Gram-positive bacteria S.aureus ATCC 2592 (MIC=4.7 ug/ml) and B.subtilis ATCC 6633 (MIC=9.38 ug/ml) and against fungus C.albicans (MIC=18.75 ug/ml). Has no activity against Gram-negative bacterium E.coli ATCC 25922 but exhibits low hemolytic activity at concentrations up to 200 ug/ml. In Amolops jingdongensis (Chinese torrent frog), this protein is Jingdongin-1.